The primary structure comprises 300 residues: tRNA dimethylallyltransferase 2 (300 aa).

13–20 (GPTGVGKT) is an ATP binding site. A substrate-binding site is contributed by 15–20 (TGVGKT). The tract at residues 38–41 (DSRQ) is interaction with substrate tRNA.

It belongs to the IPP transferase family. As to quaternary structure, monomer. Mg(2+) is required as a cofactor.

It carries out the reaction adenosine(37) in tRNA + dimethylallyl diphosphate = N(6)-dimethylallyladenosine(37) in tRNA + diphosphate. Functionally, catalyzes the transfer of a dimethylallyl group onto the adenine at position 37 in tRNAs that read codons beginning with uridine, leading to the formation of N6-(dimethylallyl)adenosine (i(6)A). The polypeptide is tRNA dimethylallyltransferase 2 (Porphyromonas gingivalis (strain ATCC 33277 / DSM 20709 / CIP 103683 / JCM 12257 / NCTC 11834 / 2561)).